Reading from the N-terminus, the 430-residue chain is Centrosomal protein CEP57L1 (430 aa).

A Phosphoserine modification is found at Ser-45. The stretch at 46–213 (PNNQALVSAL…HQRRLFQDRA (168 aa)) forms a coiled coil. Disordered stretches follow at residues 248–290 (CLKR…GEPF) and 362–430 (RKLQ…KWEQ). 3 stretches are compositionally biased toward basic and acidic residues: residues 249-272 (LKREPPQHTDCRFRGPASERERPP), 362-372 (RKLQEKVENSR), and 421-430 (LRRDDVKWEQ). The stretch at 290-377 (FSICDNLSEL…VENSRINESS (88 aa)) forms a coiled coil.

Belongs to the translokin family.

The protein localises to the cytoplasm. The protein resides in the cytoskeleton. It localises to the microtubule organizing center. Its subcellular location is the centrosome. Centrosomal protein which may be required for microtubule attachment to centrosomes. The sequence is that of Centrosomal protein CEP57L1 (Cep57l1) from Rattus norvegicus (Rat).